The chain runs to 123 residues: DNA-directed RNA polymerase subunit omega (123 aa).

A disordered region spans residues 67-123 (EESAADSLSLGGFSTADVEAEVGGGPVQPDPGASQERAFDEAADGTAQGSGDPDPTT).

It belongs to the RNA polymerase subunit omega family. In terms of assembly, the RNAP catalytic core consists of 2 alpha, 1 beta, 1 beta' and 1 omega subunit. When a sigma factor is associated with the core the holoenzyme is formed, which can initiate transcription.

It carries out the reaction RNA(n) + a ribonucleoside 5'-triphosphate = RNA(n+1) + diphosphate. Its function is as follows. Promotes RNA polymerase assembly. Latches the N- and C-terminal regions of the beta' subunit thereby facilitating its interaction with the beta and alpha subunits. This chain is DNA-directed RNA polymerase subunit omega, found in Halorhodospira halophila (strain DSM 244 / SL1) (Ectothiorhodospira halophila (strain DSM 244 / SL1)).